Here is a 570-residue protein sequence, read N- to C-terminus: Urease subunit alpha (570 aa).

Positions 131–570 constitute a Urease domain; sequence GGMDSHIHFI…LPMAQRYFLF (440 aa). Histidine 136, histidine 138, and lysine 219 together coordinate Ni(2+). Lysine 219 carries the N6-carboxylysine modification. Histidine 221 serves as a coordination point for substrate. Ni(2+)-binding residues include histidine 248 and histidine 274. Histidine 322 functions as the Proton donor in the catalytic mechanism. Aspartate 362 provides a ligand contact to Ni(2+).

Belongs to the metallo-dependent hydrolases superfamily. Urease alpha subunit family. As to quaternary structure, heterotrimer of UreA (gamma), UreB (beta) and UreC (alpha) subunits. Three heterotrimers associate to form the active enzyme. Ni cation serves as cofactor. Post-translationally, carboxylation allows a single lysine to coordinate two nickel ions.

It localises to the cytoplasm. The catalysed reaction is urea + 2 H2O + H(+) = hydrogencarbonate + 2 NH4(+). It participates in nitrogen metabolism; urea degradation; CO(2) and NH(3) from urea (urease route): step 1/1. This is Urease subunit alpha from Rhizobium leguminosarum bv. trifolii (strain WSM2304).